The sequence spans 1023 residues: Lon protease homolog (1023 aa).

Residue 515-522 (GPPGVGKT) participates in ATP binding. The region spanning 810 to 1003 (TNMIGVINGL…IEIITDPNVI (194 aa)) is the Lon proteolytic domain. S906 is an active-site residue.

It belongs to the peptidase S16 family.

The protein is Lon protease homolog of Acanthamoeba polyphaga (Amoeba).